The primary structure comprises 416 residues: MQLFAFGVNHHTAPLDIREHVAFSEESMQHALHDLVGHQLVKEAAIVSTCNRTEIYCNTDTPDKAVGWLADFHHLRFGDLEPYLYRLLREQAVKHAFRVASGLDSMVLGEPQILGQMKNAVKSAEQAGTLGLLLHKMFQRTFFVAKEVRTSTEIGACSVSMAAASARLAERIFGNISEQKVLFIGAGEMIELCAAHFVARHPVHVTVANRTVERAEALARRFNAHPISLGELPDQLALHDIVVTSTASPLPILGKGMLERAIKQRKHRPVFIVDLAVPRDVEAEVAELDDVFLYYVDDLADIVKEGLDNRQGAVTQAETIIESNVVDFMHWVATRQSVPTIRALRNQAERYRRHELARAHKLLAKGEDPEKVLESLSSGLTNKFLHLPSSVLNHATDDEREQLIELVNRLYQLHHS.

Substrate contacts are provided by residues 49 to 52 (TCNR), Ser-105, 110 to 112 (EPQ), and Gln-116. The active-site Nucleophile is Cys-50. NADP(+) is bound at residue 185–190 (GAGEMI).

Belongs to the glutamyl-tRNA reductase family. As to quaternary structure, homodimer.

The enzyme catalyses (S)-4-amino-5-oxopentanoate + tRNA(Glu) + NADP(+) = L-glutamyl-tRNA(Glu) + NADPH + H(+). It functions in the pathway porphyrin-containing compound metabolism; protoporphyrin-IX biosynthesis; 5-aminolevulinate from L-glutamyl-tRNA(Glu): step 1/2. Functionally, catalyzes the NADPH-dependent reduction of glutamyl-tRNA(Glu) to glutamate 1-semialdehyde (GSA). This Nitrosomonas europaea (strain ATCC 19718 / CIP 103999 / KCTC 2705 / NBRC 14298) protein is Glutamyl-tRNA reductase.